The sequence spans 71 residues: Mitotic-spindle organizing protein 1B (71 aa).

The protein belongs to the MOZART1 family. In terms of assembly, homo- and heteromultimer. Part of the gamma-tubulin complex. Interacts with TUBB2/TUBB3, GIP2, GCP3 and TSA1 (via C-terminal domain). Mostly expressed in siliques and flowers, and, to a lower extent, in leaves, roots and seedlings, with highest levels in young tissues and meristematic cells, and the vasculature.

The protein resides in the cytoplasm. It is found in the cytoskeleton. Its subcellular location is the microtubule organizing center. It localises to the spindle. The protein localises to the nucleus. The protein resides in the phragmoplast. It is found in the nucleus envelope. Required for gamma-tubulin complex recruitment to the microtubule organizing centers (MTOCs). During mitosis, modulates gamma-tubulin complex localization, spindle stability and chromosomal segregation. Necessary for gametophyte development and embryogenesis. This Arabidopsis thaliana (Mouse-ear cress) protein is Mitotic-spindle organizing protein 1B (GIP1).